Consider the following 1241-residue polypeptide: Interphotoreceptor matrix proteoglycan 2 (1241 aa).

A signal peptide spans Met-1–Gly-22. The Extracellular portion of the chain corresponds to Asp-23 to Pro-1099. Residue Asn-154 is glycosylated (N-linked (GlcNAc...) asparagine). The segment at Glu-180–Ile-223 is disordered. The segment covering Asp-189 to Ser-199 has biased composition (polar residues). Thr-190 and Thr-192 each carry an O-linked (GalNAc...) threonine glycan. An SEA 1 domain is found at Gly-239 to Asn-353. The segment at Gln-259 to Gln-267 is hyaluronan-binding motif involved in chondroitin sulfate A-binding. 3 N-linked (GlcNAc...) asparagine glycosylation sites follow: Asn-301, Asn-320, and Asn-370. Residues Thr-544 and Thr-556 are each glycosylated (O-linked (GalNAc...) threonine). Residues Gln-660–Glu-678 are compositionally biased toward basic and acidic residues. Positions Gln-660 to Gly-684 are disordered. Residues Gly-897–Glu-1010 form the SEA 2 domain. Residues Asn-942 and Asn-956 are each glycosylated (N-linked (GlcNAc...) asparagine). EGF-like domains lie at Glu-1010 to Gln-1051 and Ser-1052 to Glu-1093. Cystine bridges form between Cys-1014–Cys-1025, Cys-1019–Cys-1036, Cys-1038–Cys-1050, Cys-1054–Cys-1067, Cys-1061–Cys-1077, and Cys-1079–Cys-1092. The tract at residues Arg-1080–Arg-1088 is hyaluronan-binding motif involved in chondroitin sulfate C-binding. A helical membrane pass occupies residues Val-1100 to Ile-1120. Residues Tyr-1121 to Val-1241 lie on the Cytoplasmic side of the membrane. The segment at Arg-1125–Arg-1133 is hyaluronan-binding motif involved in chondroitin sulfate A- and C-binding. The interval Arg-1136 to Arg-1145 is hyaluronan-binding motif involved in chondroitin sulfate C-binding. The interval Arg-1210 to Arg-1218 is hyaluronan-binding motif involved in chondroitin sulfate A- and C-binding motif.

Highly glycosylated (N- and O-linked carbohydrates). As to expression, expressed in the retina (at protein level). Expressed by photoreceptors of the interphotoreceptor matrix (IPM) surrounding both rods and cones (at protein level). IPM occupies the subretinal space between the apices of the retinal pigment epithelium and the neural retina. Expressed in the pineal gland (at protein level).

It is found in the photoreceptor outer segment membrane. The protein localises to the photoreceptor inner segment membrane. It localises to the secreted. Its subcellular location is the extracellular space. The protein resides in the extracellular matrix. It is found in the interphotoreceptor matrix. In terms of biological role, chondroitin sulfate- and hyaluronan-binding proteoglycan involved in the organization of interphotoreceptor matrix; may participate in the maturation and maintenance of the light-sensitive photoreceptor outer segment. Binds heparin. This chain is Interphotoreceptor matrix proteoglycan 2 (IMPG2), found in Homo sapiens (Human).